The primary structure comprises 314 residues: Olfactory receptor 52K2 (314 aa).

Residues 1–27 lie on the Extracellular side of the membrane; it reads MSASNITLTHPTAFLLVGIPGLEHLHI. Asn5 is a glycosylation site (N-linked (GlcNAc...) asparagine). The helical transmembrane segment at 28 to 48 threads the bilayer; that stretch reads WISIPFCLAYTLALLGNCTLL. Residues 49-56 lie on the Cytoplasmic side of the membrane; sequence LIIQADAA. Residues 57-77 form a helical membrane-spanning segment; that stretch reads LHEPMYLFLAMLAAIDLVLSS. The Extracellular segment spans residues 78-101; that stretch reads SALPKMLAIFWFRDREINFFACLA. Cys99 and Cys191 are disulfide-bonded. A helical membrane pass occupies residues 102–122; sequence QMFFLHSFSIMESAVLLAMAF. Topologically, residues 123–141 are cytoplasmic; the sequence is DRYVAICKPLHYTKVLTGS. Residues 142–162 form a helical membrane-spanning segment; it reads LITKIGMAAVARAVTLMTPLP. Residues 163–198 are Extracellular-facing; sequence FLLRCFHYCRGPVIAHCYCEHMAVVRLACGDTSFNN. A helical membrane pass occupies residues 199 to 219; sequence IYGIAVAMFIVVLDLLLVILS. Over 220–239 the chain is Cytoplasmic; it reads YIFILQAVLLLASQEARYKA. The helical transmembrane segment at 240–260 threads the bilayer; that stretch reads FGTCVSHIGAILAFYTTVVIS. Over 261–275 the chain is Extracellular; sequence SVMHRVARHAAPHVH. The chain crosses the membrane as a helical span at residues 276–296; that stretch reads ILLANFYLLFPPMVNPIIYGV. At 297–314 the chain is on the cytoplasmic side; that stretch reads KTKQIRESILGVFPRKDM.

This sequence belongs to the G-protein coupled receptor 1 family.

Its subcellular location is the cell membrane. In terms of biological role, odorant receptor. The protein is Olfactory receptor 52K2 (OR52K2) of Homo sapiens (Human).